The primary structure comprises 65 residues: Large ribosomal subunit protein uL30 (65 aa).

The protein belongs to the universal ribosomal protein uL30 family. In terms of assembly, part of the 50S ribosomal subunit.

This Chloroflexus aurantiacus (strain ATCC 29366 / DSM 635 / J-10-fl) protein is Large ribosomal subunit protein uL30.